The chain runs to 398 residues: Arylacetamide deacetylase (398 aa).

The Cytoplasmic segment spans residues 1 to 5; sequence MGKTI. Residues 6 to 26 form a helical; Signal-anchor for type II membrane protein membrane-spanning segment; sequence SLLISVVLVAYYLYIPLPDAI. At 27-398 the chain is on the lumenal side; sequence EEPWKVVWET…QYLSWLIKNL (372 aa). The Involved in the stabilization of the negatively charged intermediate by the formation of the oxyanion hole signature appears at 110 to 112; that stretch reads HGG. An intrachain disulfide couples Cys115 to Cys339. The active site involves Ser188. Asn281 carries N-linked (GlcNAc...) asparagine glycosylation. Residues Asp342 and His372 contribute to the active site.

It belongs to the 'GDXG' lipolytic enzyme family. N-glycosylated. In terms of tissue distribution, highest levels in liver with lower levels in jejunum and kidney.

Its subcellular location is the endoplasmic reticulum membrane. The protein resides in the microsome membrane. The catalysed reaction is a triacylglycerol + H2O = a diacylglycerol + a fatty acid + H(+). Functionally, displays cellular triglyceride lipase activity in liver, increases the levels of intracellular fatty acids derived from the hydrolysis of newly formed triglyceride stores and plays a role in very low-density lipoprotein assembly. Displays serine esterase activity in liver. Deacetylates a variety of arylacetamide substrates, including xenobiotic compounds and procarcinogens, converting them to the primary arylamide compounds and increasing their toxicity. This Mus musculus (Mouse) protein is Arylacetamide deacetylase (Aadac).